A 374-amino-acid chain; its full sequence is 4-galactosyl-N-acetylglucosaminide 3-alpha-L-fucosyltransferase FUT5 (374 aa).

Over 1-15 (MDLLGAAKPQWPWRR) the chain is Cytoplasmic. The helical; Signal-anchor for type II membrane protein transmembrane segment at 16-34 (CLAGLLFQLLVAVCFFSYL) threads the bilayer. At 35–374 (RVSRDDATGS…TVRSIAAWFN (340 aa)) the chain is on the lumenal side. Residues N60, N105, N167, and N198 are each glycosylated (N-linked (GlcNAc...) asparagine).

It belongs to the glycosyltransferase 10 family.

The protein resides in the golgi apparatus. It is found in the golgi stack membrane. It carries out the reaction a beta-D-galactosyl-(1-&gt;3)-N-acetyl-beta-D-glucosaminyl derivative + GDP-beta-L-fucose = a beta-D-galactosyl-(1-&gt;3)-[alpha-L-fucosyl-(1-&gt;4)]-N-acetyl-beta-D-glucosaminyl derivative + GDP + H(+). It catalyses the reaction an N-acetyl-alpha-neuraminyl-(2-&gt;3)-beta-D-galactosyl-(1-&gt;4)-N-acetyl-beta-D-glucosaminyl derivative + GDP-beta-L-fucose = an alpha-Neu5Ac-(2-&gt;3)-beta-D-Gal-(1-&gt;4)-[alpha-L-Fuc-(1-&gt;3)]-beta-D-GlcNAc derivative + GDP + H(+). The catalysed reaction is an alpha-Neu5Ac-(2-&gt;3)-beta-D-Gal-(1-&gt;4)-beta-D-GlcNAc-(1-&gt;3)-beta-D-Gal-(1-&gt;4)-[alpha-L-Fuc-(1-&gt;3)]-beta-D-GlcNAc derivative + GDP-beta-L-fucose = an alpha-Neu5Ac-(2-&gt;3)-beta-D-Gal-(1-&gt;4)-[alpha-L-Fuc-(1-&gt;3)]-beta-D-GlcNAc-(1-&gt;3)-beta-D-Gal-(1-&gt;4)-[alpha-L-Fuc-(1-&gt;3)]-beta-D-GlcNAc derivative + GDP + H(+). The enzyme catalyses a beta-D-galactosyl-(1-&gt;4)-N-acetyl-beta-D-glucosaminyl derivative + GDP-beta-L-fucose = a beta-D-galactosyl-(1-&gt;4)-[alpha-L-fucosyl-(1-&gt;3)]-N-acetyl-beta-D-glucosaminyl derivative + GDP + H(+). It carries out the reaction a neolactoside nLc4Cer + GDP-beta-L-fucose = a neolactoside III(3)-alpha-Fuc-nLc4Cer + GDP + H(+). It catalyses the reaction a neolactoside nLc6Cer + GDP-beta-L-fucose = beta-D-galactosyl-(1-&gt;4)-N-acetyl-beta-D-glucosaminyl-(1-&gt;3)-beta-D-galactosyl-(1-&gt;4)-[alpha-L-fucosyl-(1-&gt;3)]-N-acetyl-beta-D-glucosaminyl-(1-&gt;3)-beta-D-galactosyl-(1-&gt;4)-beta-D-glucosyl-(1&lt;-&gt;1')-ceramide + GDP + H(+). The catalysed reaction is a neolactoside nLc6Cer(d18:1(4E)) + GDP-beta-L-fucose = a neolactoside III(3)-alpha-Fuc-nLc6Cer(d18:1(4E)) + GDP + H(+). The enzyme catalyses a neolactoside nLc4Cer(d18:1(4E)) + GDP-beta-L-fucose = a neolactoside III(3)-alpha-Fuc-nLc4Cer(d18:1(4E)) + GDP + H(+). It carries out the reaction a neolactoside VI(3)-alpha-NeuNAc-nLc6Cer + GDP-beta-L-fucose = a neolactoside VI(3)-alpha-NeuAc,III(3)-alphaFuc-nLc6Cer + GDP + H(+). It catalyses the reaction beta-D-galactosyl-(1-&gt;4)-N-acetyl-D-glucosamine + GDP-beta-L-fucose = beta-D-galactosyl-(1-&gt;4)-[alpha-L-fucosyl-(1-&gt;3)]-N-acetyl-D-glucosamine + GDP + H(+). The catalysed reaction is N-acetyl-alpha-neuraminosyl-(2-&gt;3)-beta-D-galactosyl-(1-&gt;4)-N-acetyl-beta-D-glucosamine + GDP-beta-L-fucose = N-acetyl-alpha-neuraminosyl-(2-&gt;3)-beta-D-galactosyl-(1-&gt;4)-[alpha-L-fucosyl-(1-&gt;3)]-N-acetyl-beta-D-glucosamine + GDP + H(+). The enzyme catalyses alpha-L-Fuc-(1-&gt;2)-beta-D-Gal-(1-&gt;4)-D-GlcNAc + GDP-beta-L-fucose = alpha-L-Fuc-(1-&gt;2)-beta-D-Gal-(1-&gt;4)-[alpha-L-Fuc-(1-&gt;3)]-D-GlcNAc + GDP + H(+). It carries out the reaction an alpha-Neu5Ac-(2-&gt;3)-beta-D-Gal-(1-&gt;3)-D-GlcNAc derivative + GDP-beta-L-fucose = an alpha-Neu5Ac-(2-&gt;3)-beta-D-Gal-(1-&gt;3)-[alpha-L-Fuc-(1-&gt;4)]-beta-D-GlcNAc derivative + GDP + H(+). It participates in protein modification; protein glycosylation. Its function is as follows. Catalyzes preferentially the transfer of L-fucose, from a guanosine diphosphate-beta-L-fucose, to the N-acetyl-beta-D-glucosamine (GlcNAc) of an N-acetyllactosamine unit (type 2 chain) of an oligosaccharide, or a glycoprotein- and a glycolipid-linked N-acetyllactosamine unit via an alpha (1,3) linkage and participates in the surface expression of VIM-2, Lewis X/SSEA-1 and sialyl Lewis X antigens. Preferentially transfers fucose to the GlcNAc of an internal N-acetyllactosamine unit of a poly-N-acetyllactosamine chain acceptor substrate. Also catalyzes to a lesser extend the transfer of L-fucose to the GlcNAc of a type 1 (beta-D-galactosyl-(1-&gt;3)-N-acetyl-beta-D-glucosaminyl) or H-type 1 (alpha-L-Fuc-(1-&gt;2)-beta-D-Gal-(1-&gt;3)-D-GlcNAc) chain oligosaccharide via an alpha (1,4) linkage. Preferentially catalyzes sialylated type 2 oligosaccharide acceptors over neutral type 2 or H type 2 (alpha-L-Fuc-(1-&gt;2)-beta-D-Gal-(1-&gt;4)-D-GlcNAc) oligosaccharide acceptors. Lactose-based structures are also acceptor substrates. This Hylobates lar (Lar gibbon) protein is 4-galactosyl-N-acetylglucosaminide 3-alpha-L-fucosyltransferase FUT5.